Consider the following 100-residue polypeptide: Urease subunit gamma (100 aa).

The protein belongs to the urease gamma subunit family. Heterotrimer of UreA (gamma), UreB (beta) and UreC (alpha) subunits. Three heterotrimers associate to form the active enzyme.

It localises to the cytoplasm. It catalyses the reaction urea + 2 H2O + H(+) = hydrogencarbonate + 2 NH4(+). It functions in the pathway nitrogen metabolism; urea degradation; CO(2) and NH(3) from urea (urease route): step 1/1. The protein is Urease subunit gamma of Aliivibrio fischeri (strain ATCC 700601 / ES114) (Vibrio fischeri).